The chain runs to 551 residues: GMP synthase [glutamine-hydrolyzing] (551 aa).

The region spanning 40-233 (KILIVDFGSQ…VRKIAGLTGD (194 aa)) is the Glutamine amidotransferase type-1 domain. The active-site Nucleophile is the Cys-117. Catalysis depends on residues His-207 and Glu-209. One can recognise a GMPS ATP-PPase domain in the interval 234–426 (WTMRAFREEE…LGLPEIFVGR (193 aa)). Residue 261-267 (SGGVDSA) coordinates ATP.

In terms of assembly, homodimer.

It carries out the reaction XMP + L-glutamine + ATP + H2O = GMP + L-glutamate + AMP + diphosphate + 2 H(+). It functions in the pathway purine metabolism; GMP biosynthesis; GMP from XMP (L-Gln route): step 1/1. Functionally, catalyzes the synthesis of GMP from XMP. The chain is GMP synthase [glutamine-hydrolyzing] from Bradyrhizobium diazoefficiens (strain JCM 10833 / BCRC 13528 / IAM 13628 / NBRC 14792 / USDA 110).